We begin with the raw amino-acid sequence, 262 residues long: MINRSAIVHPSSIIEEGAIIHSDVHVGPFCFIGAQVEIGARTLLKSHIVVNGITQIGEDNQIYQFASLGEVNQDLKYAKEPTRIEIGNYNQIRESVTIHRGTVQGGQVTKIGNSNLFMINVHIAHDCIIGNNCIMANNVTLGGHVKVDDYTIIGGMTAVHQFCLVGSHVMIGGCSGVVQDIPPFIIAQGNHATQFGLNIEGLKRRGFSRSAVHAIRDAYKILYRSNKTVEGAKVALKLLSTEHPIINEFVDFLTRSQRGIIR.

It belongs to the transferase hexapeptide repeat family. LpxA subfamily. In terms of assembly, homotrimer.

The protein resides in the cytoplasm. It catalyses the reaction a (3R)-hydroxyacyl-[ACP] + UDP-N-acetyl-alpha-D-glucosamine = a UDP-3-O-[(3R)-3-hydroxyacyl]-N-acetyl-alpha-D-glucosamine + holo-[ACP]. It participates in glycolipid biosynthesis; lipid IV(A) biosynthesis; lipid IV(A) from (3R)-3-hydroxytetradecanoyl-[acyl-carrier-protein] and UDP-N-acetyl-alpha-D-glucosamine: step 1/6. Functionally, involved in the biosynthesis of lipid A, a phosphorylated glycolipid that anchors the lipopolysaccharide to the outer membrane of the cell. The protein is Acyl-[acyl-carrier-protein]--UDP-N-acetylglucosamine O-acyltransferase of Blochmanniella floridana.